The chain runs to 202 residues: LexA repressor (202 aa).

The H-T-H motif DNA-binding region spans 28 to 48 (RAEIAQRLGFRSPNAAEEHLK). Catalysis depends on for autocatalytic cleavage activity residues Ser-119 and Lys-156.

Belongs to the peptidase S24 family. Homodimer.

The enzyme catalyses Hydrolysis of Ala-|-Gly bond in repressor LexA.. Its function is as follows. Represses a number of genes involved in the response to DNA damage (SOS response), including recA and lexA. Binds to the 16 bp palindromic sequence 5'-CTGTATATATATACAG-3'. In the presence of single-stranded DNA, RecA interacts with LexA causing an autocatalytic cleavage which disrupts the DNA-binding part of LexA, leading to derepression of the SOS regulon and eventually DNA repair. This is LexA repressor from Yersinia enterocolitica serotype O:8 / biotype 1B (strain NCTC 13174 / 8081).